The primary structure comprises 496 residues: Probable CtpA-like serine protease (496 aa).

The span at 1–16 (MDDKQHTSSSDDERAE) shows a compositional bias: basic and acidic residues. Residues 1–27 (MDDKQHTSSSDDERAEIATSNQDQETN) are disordered. Residues 18–27 (ATSNQDQETN) show a composition bias toward polar residues. Residues 39–59 (FISILIGTTLITAVITVVAYI) traverse the membrane as a helical segment. The region spanning 124-206 (TKSFNEGVSG…TEVTLTVQRG (83 aa)) is the PDZ domain. Catalysis depends on charge relay system residues Ser-329, Asp-340, and Lys-354.

This sequence belongs to the peptidase S41A family.

It is found in the cell membrane. The protein is Probable CtpA-like serine protease of Staphylococcus aureus (strain Mu50 / ATCC 700699).